A 912-amino-acid chain; its full sequence is Lateral signaling target protein 2 homolog (912 aa).

A compositionally biased stretch (low complexity) spans N323–N332. Disordered stretches follow at residues N323–Y360, A455–Q610, N664–A745, and G769–R846. Over residues S333–R355 the composition is skewed to basic and acidic residues. Polar residues predominate over residues A455–N468. Residues S486 to D505 show a composition bias toward acidic residues. The segment covering Y530–S544 has biased composition (basic residues). 2 stretches are compositionally biased toward polar residues: residues S545 to K556 and V572 to P590. The span at S591–Q610 shows a compositional bias: low complexity. Over residues D682–E699 the composition is skewed to basic and acidic residues. Composition is skewed to polar residues over residues P705–Y717, P735–A745, E780–S801, and S822–S834. The FYVE-type zinc-finger motif lies at D850–V910. 8 residues coordinate Zn(2+): C856, C859, C872, C875, C880, C883, C902, and C905.

It belongs to the lst-2 family.

In terms of biological role, negative regulator of epidermal growth factor receptor (EGFR) signaling. This is Lateral signaling target protein 2 homolog from Aedes aegypti (Yellowfever mosquito).